The following is a 160-amino-acid chain: Large ribosomal subunit protein uL22c (160 aa).

Belongs to the universal ribosomal protein uL22 family. In terms of assembly, part of the 50S ribosomal subunit.

It is found in the plastid. The protein resides in the chloroplast. This protein binds specifically to 23S rRNA. In terms of biological role, the globular domain of the protein is located near the polypeptide exit tunnel on the outside of the subunit, while an extended beta-hairpin is found that lines the wall of the exit tunnel in the center of the 70S ribosome. In Aethionema grandiflorum (Persian stone-cress), this protein is Large ribosomal subunit protein uL22c (rpl22).